The primary structure comprises 417 residues: NADH-quinone oxidoreductase subunit D (417 aa).

It belongs to the complex I 49 kDa subunit family. NDH-1 is composed of 14 different subunits. Subunits NuoB, C, D, E, F, and G constitute the peripheral sector of the complex.

The protein resides in the cell inner membrane. It catalyses the reaction a quinone + NADH + 5 H(+)(in) = a quinol + NAD(+) + 4 H(+)(out). In terms of biological role, NDH-1 shuttles electrons from NADH, via FMN and iron-sulfur (Fe-S) centers, to quinones in the respiratory chain. The immediate electron acceptor for the enzyme in this species is believed to be ubiquinone. Couples the redox reaction to proton translocation (for every two electrons transferred, four hydrogen ions are translocated across the cytoplasmic membrane), and thus conserves the redox energy in a proton gradient. This Leptothrix cholodnii (strain ATCC 51168 / LMG 8142 / SP-6) (Leptothrix discophora (strain SP-6)) protein is NADH-quinone oxidoreductase subunit D.